Consider the following 824-residue polypeptide: Glycerol-3-phosphate acyltransferase (824 aa).

The HXXXXD motif motif lies at 302 to 307; it reads CHRSHM.

This sequence belongs to the GPAT/DAPAT family.

Its subcellular location is the cell inner membrane. The catalysed reaction is sn-glycerol 3-phosphate + an acyl-CoA = a 1-acyl-sn-glycero-3-phosphate + CoA. It functions in the pathway phospholipid metabolism; CDP-diacylglycerol biosynthesis; CDP-diacylglycerol from sn-glycerol 3-phosphate: step 1/3. The polypeptide is Glycerol-3-phosphate acyltransferase (Actinobacillus pleuropneumoniae serotype 3 (strain JL03)).